Here is a 690-residue protein sequence, read N- to C-terminus: Eukaryotic translation initiation factor 3 subunit B (690 aa).

Residues 1-11 show a composition bias toward basic and acidic residues; that stretch reads MAKKKSEDHSG. Residues 1–33 form a disordered region; it reads MAKKKSEDHSGADANDSDYNEEPNFDDPPNFVD. Acidic residues predominate over residues 15–25; sequence NDSDYNEEPNF. The RRM domain occupies 57-141; sequence SVVVVDNMPK…YTFAVNLFTD (85 aa). WD repeat units follow at residues 207–246, 292–331, 334–369, 442–484, and 530–575; these read TRERFTDTFVKWSPLGTYVVTFHKPGVAIWGGSSFQKIQK, GDGMSVLSMFRWSHDDKYVARMGESSIHIYETPSFYLLDL, IKIPGIRGFSWSPTDNVIAYWVEEQNQIPARVTLMK, EIRE…KPSL, and PDHF…IKRT. Residues 613–646 adopt a coiled-coil conformation; it reads EQKDRLRLTRASKELLEKRAQLRETFMEYRNKRI.

This sequence belongs to the eIF-3 subunit B family. As to quaternary structure, component of the eukaryotic translation initiation factor 3 (eIF-3) complex. The eIF-3 complex interacts with pix. Interacts with mxt.

It is found in the cytoplasm. Its function is as follows. RNA-binding component of the eukaryotic translation initiation factor 3 (eIF-3) complex, which is involved in protein synthesis of a specialized repertoire of mRNAs and, together with other initiation factors, stimulates binding of mRNA and methionyl-tRNAi to the 40S ribosome. The eIF-3 complex specifically targets and initiates translation of a subset of mRNAs involved in cell proliferation. This Drosophila grimshawi (Hawaiian fruit fly) protein is Eukaryotic translation initiation factor 3 subunit B.